The following is a 194-amino-acid chain: Ion-translocating oxidoreductase complex subunit A (194 aa).

Helical transmembrane passes span 1–21 (MVMHFFLLFVSNILINNFILV), 48–68 (CVIVFVSIISWLINFYILIPF), 73–93 (LCTMTYMLIIAVSVQIFEIIV), 103–123 (LLGIYLPLITTNCSVLAIPLM), 135–155 (VLYGFSSSLGFFLVLVIFSSI), and 172–192 (PIALITASLLAIAFMGFDGLI).

It belongs to the NqrDE/RnfAE family. In terms of assembly, the complex is composed of six subunits: RnfA, RnfB, RnfC, RnfD, RnfE and RnfG.

Its subcellular location is the cell inner membrane. Functionally, part of a membrane-bound complex that couples electron transfer with translocation of ions across the membrane. In Buchnera aphidicola subsp. Baizongia pistaciae (strain Bp), this protein is Ion-translocating oxidoreductase complex subunit A.